A 249-amino-acid polypeptide reads, in one-letter code: Triosephosphate isomerase (249 aa).

Positions 12 and 14 each coordinate substrate. At Lys14 the chain carries N6-acetyllysine. 3'-nitrotyrosine is present on Tyr68. Ser80 bears the Phosphoserine mark. His96 functions as the Electrophile in the catalytic mechanism. Phosphoserine is present on Ser106. Lys142 participates in a covalent cross-link: Glycyl lysine isopeptide (Lys-Gly) (interchain with G-Cter in SUMO1). Lys149 is modified (N6-succinyllysine). Lys156 is subject to N6-acetyllysine; alternate. Lys156 carries the post-translational modification N6-succinyllysine; alternate. Phosphoserine is present on Ser159. The active-site Proton acceptor is the Glu166. Residue Thr173 is modified to Phosphothreonine. Lys194 bears the N6-acetyllysine; alternate mark. Position 194 is an N6-succinyllysine; alternate (Lys194). Lys194 is modified (N6-methyllysine; alternate). A Phosphoserine modification is found at Ser198. The residue at position 209 (Tyr209) is a 3'-nitrotyrosine. The residue at position 212 (Ser212) is a Phosphoserine. Thr214 is subject to Phosphothreonine. Residue Ser223 is modified to Phosphoserine. Lys238 carries the N6-acetyllysine modification.

Belongs to the triosephosphate isomerase family. Homodimer.

The protein resides in the cytoplasm. The enzyme catalyses dihydroxyacetone phosphate = methylglyoxal + phosphate. It carries out the reaction D-glyceraldehyde 3-phosphate = dihydroxyacetone phosphate. It functions in the pathway carbohydrate degradation; glycolysis; D-glyceraldehyde 3-phosphate from glycerone phosphate: step 1/1. The protein operates within carbohydrate biosynthesis; gluconeogenesis. In terms of biological role, triosephosphate isomerase is an extremely efficient metabolic enzyme that catalyzes the interconversion between dihydroxyacetone phosphate (DHAP) and D-glyceraldehyde-3-phosphate (G3P) in glycolysis and gluconeogenesis. Its function is as follows. It is also responsible for the non-negligible production of methylglyoxal a reactive cytotoxic side-product that modifies and can alter proteins, DNA and lipids. The sequence is that of Triosephosphate isomerase (TPI1) from Macaca fascicularis (Crab-eating macaque).